A 501-amino-acid polypeptide reads, in one-letter code: ADP,ATP carrier protein 3 (501 aa).

Transmembrane regions (helical) follow at residues 23 to 43, 59 to 79, 90 to 110, 146 to 166, 183 to 203, 227 to 247, 293 to 313, 326 to 346, 361 to 381, 383 to 403, 446 to 466, and 470 to 490; these read LKLF…FGAL, IISF…TVLY, YIFY…AYII, YALM…LMFW, PVLG…LVFF, IILQ…MFLF, IALL…PWKA, VNFM…FMII, LLTP…IIFI, EIGT…VGAI, FGKS…PTAT, and IIIY…WNII.

It belongs to the ADP/ATP translocase tlc family.

The protein resides in the cell membrane. Provides the rickettsial cell with host ATP in exchange for rickettsial ADP. This is an obligate exchange system. This energy acquiring activity is an important component of rickettsial parasitism. The sequence is that of ADP,ATP carrier protein 3 (tlcC) from Rickettsia typhi (strain ATCC VR-144 / Wilmington).